The primary structure comprises 98 residues: UPF0390 protein zgc136864 (98 aa).

The span at 1 to 30 (MAQGKQKFKAQRPGGAKKHQNKPKGLKKGG) shows a compositional bias: basic residues. Disordered regions lie at residues 1 to 38 (MAQG…PKKA) and 63 to 98 (TQKA…GPSK). Residues 83-98 (KSGTAGAPKPAAGPSK) show a composition bias toward low complexity.

This sequence belongs to the UPF0390 family.

The chain is UPF0390 protein zgc136864 from Danio rerio (Zebrafish).